Reading from the N-terminus, the 417-residue chain is Serine hydroxymethyltransferase (417 aa).

(6S)-5,6,7,8-tetrahydrofolate is bound by residues leucine 121 and 125–127 (GHL). Residue lysine 230 is modified to N6-(pyridoxal phosphate)lysine. 355–357 (SPF) is a (6S)-5,6,7,8-tetrahydrofolate binding site.

It belongs to the SHMT family. In terms of assembly, homodimer. It depends on pyridoxal 5'-phosphate as a cofactor.

It is found in the cytoplasm. The enzyme catalyses (6R)-5,10-methylene-5,6,7,8-tetrahydrofolate + glycine + H2O = (6S)-5,6,7,8-tetrahydrofolate + L-serine. Its pathway is one-carbon metabolism; tetrahydrofolate interconversion. It participates in amino-acid biosynthesis; glycine biosynthesis; glycine from L-serine: step 1/1. Functionally, catalyzes the reversible interconversion of serine and glycine with tetrahydrofolate (THF) serving as the one-carbon carrier. This reaction serves as the major source of one-carbon groups required for the biosynthesis of purines, thymidylate, methionine, and other important biomolecules. Also exhibits THF-independent aldolase activity toward beta-hydroxyamino acids, producing glycine and aldehydes, via a retro-aldol mechanism. In Legionella pneumophila (strain Corby), this protein is Serine hydroxymethyltransferase.